A 379-amino-acid polypeptide reads, in one-letter code: MSNFLPFSRPAMGAEELAAVKEVLESGWITTGPKNLALEDAFIQLTGNQYAIAVSSATAGMHITLMALEIGPGDEVITPSMTWVSTLNMISLLGATPVMVDVDRDTLMVTPEIVEAAITPRTKAIIPVHYAGAPADTNALYAIAERHGIAVIEDAAHAVGTYYKGQHVGARGTAIFSFHAIKNITCAEGGLVVTDDESLARQLRTLKFHGLGVDAYDRQTWGRAPQAEVLTPGYKYNLTDINAAIALTQLHKLEQLNARRHDIATQYQHALVNLPFQPLALPAWPHIHSWHLFIIRVDEQRCGINRDTLMEALKEKGIGTGLHFRAAHTQKYYRQHFPDLSLPNTEWNSERICSLPLFPDMTNADAERVITALHQLAGQ.

Lysine 182 carries the post-translational modification N6-(pyridoxal phosphate)lysine.

Belongs to the DegT/DnrJ/EryC1 family. ArnB subfamily. Homodimer. The cofactor is pyridoxal 5'-phosphate.

It catalyses the reaction UDP-4-amino-4-deoxy-beta-L-arabinose + 2-oxoglutarate = UDP-beta-L-threo-pentopyranos-4-ulose + L-glutamate. Its pathway is nucleotide-sugar biosynthesis; UDP-4-deoxy-4-formamido-beta-L-arabinose biosynthesis; UDP-4-deoxy-4-formamido-beta-L-arabinose from UDP-alpha-D-glucuronate: step 2/3. The protein operates within bacterial outer membrane biogenesis; lipopolysaccharide biosynthesis. Catalyzes the conversion of UDP-4-keto-arabinose (UDP-Ara4O) to UDP-4-amino-4-deoxy-L-arabinose (UDP-L-Ara4N). The modified arabinose is attached to lipid A and is required for resistance to polymyxin and cationic antimicrobial peptides. In Escherichia fergusonii (strain ATCC 35469 / DSM 13698 / CCUG 18766 / IAM 14443 / JCM 21226 / LMG 7866 / NBRC 102419 / NCTC 12128 / CDC 0568-73), this protein is UDP-4-amino-4-deoxy-L-arabinose--oxoglutarate aminotransferase.